A 547-amino-acid polypeptide reads, in one-letter code: Sodium-coupled neutral amino acid transporter 4 (547 aa).

A disordered region spans residues 1-34 (MDPMELNNVSIEPDGDSCSGDSIQDSYTGMENSD). The Extracellular portion of the chain corresponds to 1 to 104 (MDPMELNNVS…GLSYAMANTG (104 aa)). Positions 19–31 (SGDSIQDSYTGME) are enriched in polar residues. A Phosphoserine modification is found at S49. The chain crosses the membrane as a helical span at residues 105–125 (IILFIIMLLTVAILSLYSVHL). The Cytoplasmic segment spans residues 126 to 151 (LLKTAKEGGSLIYEKLGEKAFGWPGK). Residues 152–172 (IGAFISITMQNIGAMSSYLFI) traverse the membrane as a helical segment. At 173–195 (IKYELPEVIRAFMGLEENTGEWY) the chain is on the extracellular side. The chain crosses the membrane as a helical span at residues 196–216 (LNGNYLVLFVSVGIILPLSLL). Topologically, residues 217 to 220 (KNLG) are cytoplasmic. Residues 221 to 241 (YLGYTSGFSLSCMVFFVSVVI) form a helical membrane-spanning segment. Residues 242-332 (YKKFQIPCPL…PKYFVFNSRT (91 aa)) lie on the Extracellular side of the membrane. A disulfide bond links C249 and C321. N260, N264, and N276 each carry an N-linked (GlcNAc...) asparagine glycan. A helical transmembrane segment spans residues 333–353 (AYAIPILAFAFVCHPEVLPIY). At 354 to 369 (SELKDRSRRKMQTVSN) the chain is on the cytoplasmic side. The helical transmembrane segment at 370-390 (ISISGMLVMYLLAALFGYLSF) threads the bilayer. The Extracellular portion of the chain corresponds to 391-411 (YGDVEDELLHAYSKVYTFDTA). The helical transmembrane segment at 412 to 432 (LLMVRLAVLVAVTLTVPIVLF) threads the bilayer. Residues 433 to 453 (PIRTSVITLLFPRKPFSWLKH) lie on the Cytoplasmic side of the membrane. A helical membrane pass occupies residues 454 to 474 (FGIAAIIIALNNILVILVPTI). Residues 475–476 (KY) are Extracellular-facing. The chain crosses the membrane as a helical span at residues 477 to 497 (IFGFIGASSATMLIFILPAAF). Topologically, residues 498 to 514 (YLKLVKKEPLRSPQKIG) are cytoplasmic. The helical transmembrane segment at 515-535 (ALVFLVTGIIFMMGSMALIIL) threads the bilayer. Topologically, residues 536-547 (DWIYNPPNPNHH) are extracellular.

The protein belongs to the amino acid/polyamine transporter 2 family. The disulfide bond plays an important role in substrate transport, but has no effect on trafficking to the cell surface. As to expression, detected in liver, in hepatocytes surrounding the central vein. Not detected in heart, kidney, brain, lung, small intestine, spleen and thymus. Highly expressed in placenta.

It is found in the cell membrane. The protein localises to the cell projection. The protein resides in the microvillus membrane. It carries out the reaction L-alanine(in) + Na(+)(in) = L-alanine(out) + Na(+)(out). It catalyses the reaction L-methionine(in) + Na(+)(in) = L-methionine(out) + Na(+)(out). The catalysed reaction is L-asparagine(in) + Na(+)(in) = L-asparagine(out) + Na(+)(out). The enzyme catalyses L-threonine(in) + Na(+)(in) = L-threonine(out) + Na(+)(out). It carries out the reaction L-serine(in) + Na(+)(in) = L-serine(out) + Na(+)(out). It catalyses the reaction glycine(in) + Na(+)(in) = glycine(out) + Na(+)(out). The catalysed reaction is L-glutamine(in) + Na(+)(in) = L-glutamine(out) + Na(+)(out). The enzyme catalyses L-histidine(in) + Na(+)(in) = L-histidine(out) + Na(+)(out). It carries out the reaction L-cysteine(in) + Na(+)(in) = L-cysteine(out) + Na(+)(out). It catalyses the reaction L-proline(in) + Na(+)(in) = L-proline(out) + Na(+)(out). In terms of biological role, symporter that cotransports neutral amino acids and sodium ions from the extraccellular to the intracellular side of the cell membrane. The transport is electrogenic, pH dependent and partially tolerates substitution of Na(+) by Li(+). Preferentially transports smaller amino acids, such as glycine, L-alanine, L-serine, L-asparagine and L-threonine, followed by L-cysteine, L-histidine, L-proline and L-glutamine and L-methionine. The polypeptide is Sodium-coupled neutral amino acid transporter 4 (Mus musculus (Mouse)).